We begin with the raw amino-acid sequence, 82 residues long: ATP synthase subunit c, chloroplastic (82 aa).

The next 2 membrane-spanning stretches (helical) occupy residues 3 to 23 and 57 to 77; these read PLIC…GAIG and LAFM…LMFA.

This sequence belongs to the ATPase C chain family. As to quaternary structure, F-type ATPases have 2 components, F(1) - the catalytic core - and F(0) - the membrane proton channel. F(1) has five subunits: alpha(3), beta(3), gamma(1), delta(1), epsilon(1). F(0) has four main subunits: a(1), b(1), b'(1) and c(10-14). The alpha and beta chains form an alternating ring which encloses part of the gamma chain. F(1) is attached to F(0) by a central stalk formed by the gamma and epsilon chains, while a peripheral stalk is formed by the delta, b and b' chains.

The protein resides in the plastid. It localises to the chloroplast thylakoid membrane. Its function is as follows. F(1)F(0) ATP synthase produces ATP from ADP in the presence of a proton or sodium gradient. F-type ATPases consist of two structural domains, F(1) containing the extramembraneous catalytic core and F(0) containing the membrane proton channel, linked together by a central stalk and a peripheral stalk. During catalysis, ATP synthesis in the catalytic domain of F(1) is coupled via a rotary mechanism of the central stalk subunits to proton translocation. Key component of the F(0) channel; it plays a direct role in translocation across the membrane. A homomeric c-ring of between 10-14 subunits forms the central stalk rotor element with the F(1) delta and epsilon subunits. The protein is ATP synthase subunit c, chloroplastic of Ostreococcus tauri.